We begin with the raw amino-acid sequence, 463 residues long: UDP-N-acetylmuramoylalanine--D-glutamate ligase (463 aa).

116 to 122 (GTNGKTT) contributes to the ATP binding site.

It belongs to the MurCDEF family.

It is found in the cytoplasm. It catalyses the reaction UDP-N-acetyl-alpha-D-muramoyl-L-alanine + D-glutamate + ATP = UDP-N-acetyl-alpha-D-muramoyl-L-alanyl-D-glutamate + ADP + phosphate + H(+). It participates in cell wall biogenesis; peptidoglycan biosynthesis. Cell wall formation. Catalyzes the addition of glutamate to the nucleotide precursor UDP-N-acetylmuramoyl-L-alanine (UMA). In Synechococcus elongatus (strain ATCC 33912 / PCC 7942 / FACHB-805) (Anacystis nidulans R2), this protein is UDP-N-acetylmuramoylalanine--D-glutamate ligase.